The primary structure comprises 85 residues: N.vectensis toxin 1 5 (85 aa).

An N-terminal signal peptide occupies residues methionine 1 to alanine 20. A propeptide spanning residues arginine 21–serine 36 is cleaved from the precursor. 3 disulfide bridges follow: cysteine 42–cysteine 82, cysteine 44–cysteine 72, and cysteine 65–cysteine 83.

This sequence belongs to the sea anemone sodium channel inhibitory toxin family. Type II subfamily. Expressed in ectodermal glands and in clumps outside of the extodermal layer. Is not expressed in nematocytes. In adult female tissues, shows similar expression levels in mesenteries (gametes-producing tissue), tentacles, pharynx and physa.

The protein localises to the secreted. Functionally, binds to site 3 of voltage-gated sodium channels and inhibits the inactivation process. Is highly active on DmNav1/TipE (drosophila) and is only extremely weakly active on rat Nav1.4-beta-1/SCN4A-SCN1B, and on human Nav1.5-beta-1/SCN5A-beta-1. This reveals high specificity for arthropod over mammalian channels. In vivo, when released into the medium, this recombinant toxin induces impaired swimming, paralysis and death of the crustacean A.nauplii within several hours. Also causes paralysis of cherry shrimps immediately after injection at very low doses. Its effect on zebrafish (D.rerio) larvae is also rapid, since it induces tail twitching accompanied by impaired swimming after 20 minutes and complete paralysis within 45 minutes. It has also been observed to cause death of zebrafish larvae within 1 hour. This chain is N.vectensis toxin 1 5, found in Nematostella vectensis (Starlet sea anemone).